The primary structure comprises 43 residues: Protein PsbN (43 aa).

A helical transmembrane segment spans residues 7–29; the sequence is VAIFLSGLLVSFTGYALYTAFGQ.

The protein belongs to the PsbN family.

The protein resides in the plastid. It is found in the chloroplast thylakoid membrane. Functionally, may play a role in photosystem I and II biogenesis. The polypeptide is Protein PsbN (Draba nemorosa (Woodland whitlowgrass)).